We begin with the raw amino-acid sequence, 383 residues long: Succinyl-diaminopimelate desuccinylase (383 aa).

Zn(2+) is bound at residue histidine 73. Aspartate 75 is a catalytic residue. Aspartate 107 contributes to the Zn(2+) binding site. Residue glutamate 141 is the Proton acceptor of the active site. Zn(2+) is bound by residues glutamate 142, glutamate 170, and histidine 356.

Belongs to the peptidase M20A family. DapE subfamily. In terms of assembly, homodimer. The cofactor is Zn(2+). It depends on Co(2+) as a cofactor.

It carries out the reaction N-succinyl-(2S,6S)-2,6-diaminopimelate + H2O = (2S,6S)-2,6-diaminopimelate + succinate. It functions in the pathway amino-acid biosynthesis; L-lysine biosynthesis via DAP pathway; LL-2,6-diaminopimelate from (S)-tetrahydrodipicolinate (succinylase route): step 3/3. Its function is as follows. Catalyzes the hydrolysis of N-succinyl-L,L-diaminopimelic acid (SDAP), forming succinate and LL-2,6-diaminopimelate (DAP), an intermediate involved in the bacterial biosynthesis of lysine and meso-diaminopimelic acid, an essential component of bacterial cell walls. The sequence is that of Succinyl-diaminopimelate desuccinylase from Pseudomonas syringae pv. tomato (strain ATCC BAA-871 / DC3000).